Reading from the N-terminus, the 648-residue chain is MISLNSSFLERSSVTGGSRTQSQSLRLSARRPVVTSMLNSNSLPERNVSVSVDSAVRDVNAPVAVEVDRSVGEKPFAAVGGGVEDMYGEDTATEDHYITPWSVSVASGYSLLRDPHHNKGLAFTEKERDAHFLRGLLPPVVVNHDLQVKKMMHNIRQYQVPLQRYQAMMDLQQRNERLFYKLLIENVEELLPIVYTPTVGEACQKYGSIFENSQGLFISLKDKGRILEILKNWPHKKIQVIVVTDGERILGLGDLGCQGMGIPVGKLALYTALGGVRPSACLPITIDVGTNNEKLLNDDEFYIGLKQKRAAGQEYAELMNEFMSAVKQNYGENLLIQFEDFANHNAFDLLEKYRTTHLVFNDDIQGTASVVLGGLISALKLVGGSLADQKFLFLGAGEAGTGIAELIALEISKQTNIPLEESRKKVWLVDSKGLIVRSRLDSLQHFKKPWAHDHEPVNEFLDAIKTIRPTVLIGSSGTGQTFTKEVVETMSSLNEKPIILALSNPTSQSECTAEQAYTWSEGRAIFASGSPFKPVEYNGKLYVSGQANNAYIFPGFGLGLIISGAIRVHDDMLLAASEAPAEQVTQEHFDKGLIFPPFTSIRKISAHIAAKVAAKAYELGLASRLPQPENLVAYAESCMYSPKYRIYR.

The transit peptide at 1-61 (MISLNSSFLE…VDSAVRDVNA (61 aa)) directs the protein to the chloroplast. The active-site Proton donor is tyrosine 195. Arginine 248 is a binding site for NAD(+). Residue lysine 266 is the Proton acceptor of the active site. A divalent metal cation contacts are provided by glutamate 339, aspartate 340, and aspartate 363. Aspartate 363 lines the NAD(+) pocket. Position 392–408 (392–408 (LFLGAGEAGTGIAELIA)) interacts with NADP(+). Asparagine 504 contributes to the NAD(+) binding site.

Belongs to the malic enzymes family. As to quaternary structure, homotetramer. Requires Mg(2+) as cofactor. The cofactor is Mn(2+).

The protein localises to the plastid. Its subcellular location is the chloroplast. The catalysed reaction is (S)-malate + NADP(+) = pyruvate + CO2 + NADPH. It catalyses the reaction oxaloacetate + H(+) = pyruvate + CO2. The protein operates within photosynthesis; C4 acid pathway. Its function is as follows. The chloroplastic ME isoform decarboxylates malate shuttled from neighboring mesophyll cells. The CO(2) released is then refixed by ribulose-bisphosphate carboxylase. This pathway eliminates the photorespiratory loss of CO(2) that occurs in most plants. The sequence is that of NADP-dependent malic enzyme, chloroplastic (MOD1) from Flaveria trinervia (Clustered yellowtops).